A 399-amino-acid chain; its full sequence is Elongation factor Tu (399 aa).

The region spanning 10–204 (KPHVNIGTIG…AVDASIPEPE (195 aa)) is the tr-type G domain. The interval 19 to 26 (GHVDHGKT) is G1. 19-26 (GHVDHGKT) contacts GTP. T26 provides a ligand contact to Mg(2+). Positions 60 to 64 (GITIN) are G2. A G3 region spans residues 81–84 (DCPG). Residues 81 to 85 (DCPGH) and 136 to 139 (NKCD) contribute to the GTP site. Residues 136–139 (NKCD) are G4. The segment at 174 to 176 (SGL) is G5.

It belongs to the TRAFAC class translation factor GTPase superfamily. Classic translation factor GTPase family. EF-Tu/EF-1A subfamily. Monomer.

It is found in the cytoplasm. It catalyses the reaction GTP + H2O = GDP + phosphate + H(+). In terms of biological role, GTP hydrolase that promotes the GTP-dependent binding of aminoacyl-tRNA to the A-site of ribosomes during protein biosynthesis. The protein is Elongation factor Tu of Prochlorococcus marinus (strain AS9601).